The chain runs to 517 residues: Probable bifunctional methylthioribulose-1-phosphate dehydratase/enolase-phosphatase E1 1 (517 aa).

A methylthioribulose-1-phosphate dehydratase region spans residues 1 to 240 (MAAAALNGLK…AIKLYQLGLD (240 aa)). A substrate-binding site is contributed by C112. The Zn(2+) site is built by H130 and H132. Catalysis depends on E155, which acts as the Proton donor/acceptor; for methylthioribulose-1-phosphate dehydratase activity. H205 is a binding site for Zn(2+). An enolase-phosphatase E1 region spans residues 278-517 (IVLDIEGTTT…FKTITSFSDI (240 aa)). The Mg(2+) site is built by D281 and E283. Substrate contacts are provided by residues 416–417 (SS) and K450. Residue D476 participates in Mg(2+) binding.

The protein in the N-terminal section; belongs to the aldolase class II family. MtnB subfamily. It in the C-terminal section; belongs to the HAD-like hydrolase superfamily. MasA/MtnC family. Requires Zn(2+) as cofactor. Mg(2+) is required as a cofactor.

It catalyses the reaction 5-(methylsulfanyl)-D-ribulose 1-phosphate = 5-methylsulfanyl-2,3-dioxopentyl phosphate + H2O. The enzyme catalyses 5-methylsulfanyl-2,3-dioxopentyl phosphate + H2O = 1,2-dihydroxy-5-(methylsulfanyl)pent-1-en-3-one + phosphate. It participates in amino-acid biosynthesis; L-methionine biosynthesis via salvage pathway; L-methionine from S-methyl-5-thio-alpha-D-ribose 1-phosphate: step 2/6. Its pathway is amino-acid biosynthesis; L-methionine biosynthesis via salvage pathway; L-methionine from S-methyl-5-thio-alpha-D-ribose 1-phosphate: step 3/6. It functions in the pathway amino-acid biosynthesis; L-methionine biosynthesis via salvage pathway; L-methionine from S-methyl-5-thio-alpha-D-ribose 1-phosphate: step 4/6. The protein is Probable bifunctional methylthioribulose-1-phosphate dehydratase/enolase-phosphatase E1 1 of Vitis vinifera (Grape).